The chain runs to 544 residues: CTP synthase (544 aa).

The interval 1-267 (MAKFVFITGG…AQRVLQILNL (267 aa)) is amidoligase domain. Ser13 lines the CTP pocket. Ser13 contributes to the UTP binding site. Residue 14–19 (SIGKGI) participates in ATP binding. L-glutamine is bound at residue Tyr54. Asp71 lines the ATP pocket. Asp71 and Glu141 together coordinate Mg(2+). CTP-binding positions include 148 to 150 (DIE), 188 to 193 (KTKPTQ), and Lys224. UTP-binding positions include 188–193 (KTKPTQ) and Lys224. Residues 292–534 (EIAIVGKYVR…IEAALRSRSR (243 aa)) enclose the Glutamine amidotransferase type-1 domain. Gly354 contributes to the L-glutamine binding site. The Nucleophile; for glutamine hydrolysis role is filled by Cys381. Residues 382-385 (LGMQ), Glu405, and Arg462 each bind L-glutamine. Catalysis depends on residues His507 and Glu509.

The protein belongs to the CTP synthase family. Homotetramer.

It catalyses the reaction UTP + L-glutamine + ATP + H2O = CTP + L-glutamate + ADP + phosphate + 2 H(+). It carries out the reaction L-glutamine + H2O = L-glutamate + NH4(+). The enzyme catalyses UTP + NH4(+) + ATP = CTP + ADP + phosphate + 2 H(+). It functions in the pathway pyrimidine metabolism; CTP biosynthesis via de novo pathway; CTP from UDP: step 2/2. Allosterically activated by GTP, when glutamine is the substrate; GTP has no effect on the reaction when ammonia is the substrate. The allosteric effector GTP functions by stabilizing the protein conformation that binds the tetrahedral intermediate(s) formed during glutamine hydrolysis. Inhibited by the product CTP, via allosteric rather than competitive inhibition. Catalyzes the ATP-dependent amination of UTP to CTP with either L-glutamine or ammonia as the source of nitrogen. Regulates intracellular CTP levels through interactions with the four ribonucleotide triphosphates. In Synechococcus sp. (strain JA-3-3Ab) (Cyanobacteria bacterium Yellowstone A-Prime), this protein is CTP synthase.